The sequence spans 441 residues: Ribosomal protein uS12 methylthiotransferase RimO (441 aa).

One can recognise an MTTase N-terminal domain in the interval 7–117 (PKISFVSLGC…VLEAVHRARP (111 aa)). Residues Cys-16, Cys-52, Cys-81, Cys-148, Cys-152, and Cys-155 each coordinate [4Fe-4S] cluster. Residues 134–371 (LTPRHYAYLK…MARQQAISAR (238 aa)) form the Radical SAM core domain. The region spanning 374-440 (KRKVGTRQQV…AYDLHGTVAG (67 aa)) is the TRAM domain.

Belongs to the methylthiotransferase family. RimO subfamily. It depends on [4Fe-4S] cluster as a cofactor.

It is found in the cytoplasm. The enzyme catalyses L-aspartate(89)-[ribosomal protein uS12]-hydrogen + (sulfur carrier)-SH + AH2 + 2 S-adenosyl-L-methionine = 3-methylsulfanyl-L-aspartate(89)-[ribosomal protein uS12]-hydrogen + (sulfur carrier)-H + 5'-deoxyadenosine + L-methionine + A + S-adenosyl-L-homocysteine + 2 H(+). Functionally, catalyzes the methylthiolation of an aspartic acid residue of ribosomal protein uS12. The protein is Ribosomal protein uS12 methylthiotransferase RimO of Rhodopseudomonas palustris (strain ATCC BAA-98 / CGA009).